The primary structure comprises 283 residues: Poly(3-hydroxyalkanoate) depolymerase (283 aa).

An AB hydrolase-1 domain is found at 30-253 (PLLIFNGIGA…IDDGHLFLIT (224 aa)). Ser-102 serves as the catalytic Charge relay system.

This sequence belongs to the AB hydrolase superfamily. Lipase family.

In terms of biological role, complements a mutant that does not degrade PHA; might be a lipase. The sequence is that of Poly(3-hydroxyalkanoate) depolymerase from Ectopseudomonas oleovorans (Pseudomonas oleovorans).